Consider the following 49-residue polypeptide: Glutathione peroxidase (49 aa).

Belongs to the glutathione peroxidase family.

It catalyses the reaction 2 glutathione + H2O2 = glutathione disulfide + 2 H2O. Inhibited by Cu(2+), SDS and DTT. Activity is slightly increased by Fe(2+), Mn(2+), triton X-100 and EDTA. Functionally, glutathione peroxidase which may protect the cell from oxidative damage. The chain is Glutathione peroxidase from Lactiplantibacillus plantarum (Lactobacillus plantarum).